A 543-amino-acid polypeptide reads, in one-letter code: tRNA (guanine(37)-N(1))-methyltransferase (543 aa).

The N-terminal 59 residues, Met1–Thr59, are a transit peptide targeting the mitochondrion. Residues His282, Asp320 to Leu321, and Asp348 to Gly349 contribute to the S-adenosyl-L-methionine site. Positions Asp366–Met405 are disordered. Asn431 contacts S-adenosyl-L-methionine.

This sequence belongs to the class I-like SAM-binding methyltransferase superfamily. TRM5/TYW2 family. Monomer.

It localises to the mitochondrion matrix. The protein localises to the nucleus. The protein resides in the cytoplasm. The catalysed reaction is guanosine(37) in tRNA + S-adenosyl-L-methionine = N(1)-methylguanosine(37) in tRNA + S-adenosyl-L-homocysteine + H(+). Specifically methylates the N1 position of guanosine-37 in various cytoplasmic and mitochondrial tRNAs. Methylation is not dependent on the nature of the nucleoside 5' of the target nucleoside. This is the first step in the biosynthesis of wybutosine (yW), a modified base adjacent to the anticodon of tRNAs and required for accurate decoding. The sequence is that of tRNA (guanine(37)-N(1))-methyltransferase from Cryptococcus neoformans var. neoformans serotype D (strain JEC21 / ATCC MYA-565) (Filobasidiella neoformans).